The chain runs to 236 residues: Bax inhibitor 1 (236 aa).

Over 1 to 29 (MNIFDRKINFDALFKFSHITPSTQQHLKK) the chain is Cytoplasmic. A Glycyl lysine isopeptide (Lys-Gly) (interchain with G-Cter in ubiquitin) cross-link involves residue Lys-7. The chain crosses the membrane as a helical span at residues 30-50 (VYASFALCMFVAAAGAYIHVV). Over 51–52 (TH) the chain is Lumenal. A helical transmembrane segment spans residues 53-73 (FIQAGLLSALGSLGLMIWLMA). The Cytoplasmic portion of the chain corresponds to 74–86 (TPHSHETEQKRLG). The helical transmembrane segment at 87–107 (LLAGFAFLTGVGLGPALDLCI) threads the bilayer. Residues 108 to 112 (AINPS) lie on the Lumenal side of the membrane. Residues 113-133 (ILPTAFMGTAMIFTCFTLSAL) form a helical membrane-spanning segment. The Cytoplasmic portion of the chain corresponds to 134–139 (YARRRS). The chain crosses the membrane as a helical span at residues 140 to 160 (YLFLGGILMSAMSLMLLSSLG). The Lumenal segment spans residues 161 to 166 (NLFFGS). A helical transmembrane segment spans residues 167-187 (VWLFQANLYMGLVVMCGFVLF). Topologically, residues 188 to 206 (DTQLIIEKAENGDKDYIWH) are cytoplasmic. An intramembrane region (helical) is located at residues 207–227 (CVDLFLDFVTLFRKLMMILAM). The Cytoplasmic segment spans residues 228 to 236 (NEKDKKKKK).

The protein belongs to the BI1 family. Interacts with BCL2 and BCL2L1. Interacts with ERN1. In terms of processing, ubiquitinated by BFAR, leading to proteasomal degradation.

Its subcellular location is the endoplasmic reticulum membrane. Functionally, endoplasmic reticulum (ER)-resident protein that confers cellular protection as an anti-apoptotic protein by limiting multiple stress-inducing pathways surrounding the endoplasmic reticulum and mitochondria. Inhibits the activities of the key sensor for the endoplasmic reticulum unfolded protein response IRE1alpha/ERN1 both directly and by blocking BAX/BAK binding. Modulates ER calcium homeostasis by acting as a calcium-leak channel. Negatively regulates autophagy and autophagosome formation, especially during periods of nutrient deprivation, and reduces cell survival during starvation. This chain is Bax inhibitor 1 (TMBIM6), found in Bos taurus (Bovine).